A 274-amino-acid chain; its full sequence is Large ribosomal subunit protein uL2 (274 aa).

2 disordered regions span residues 40 to 59 (SGGR…GGHK) and 223 to 274 (VAMN…RRSR). Composition is skewed to basic residues over residues 49-59 (VTRRHQGGGHK) and 256-274 (YRTR…RRSR).

It belongs to the universal ribosomal protein uL2 family. As to quaternary structure, part of the 50S ribosomal subunit. Forms a bridge to the 30S subunit in the 70S ribosome.

Functionally, one of the primary rRNA binding proteins. Required for association of the 30S and 50S subunits to form the 70S ribosome, for tRNA binding and peptide bond formation. It has been suggested to have peptidyltransferase activity; this is somewhat controversial. Makes several contacts with the 16S rRNA in the 70S ribosome. The polypeptide is Large ribosomal subunit protein uL2 (Acidithiobacillus ferrooxidans (strain ATCC 23270 / DSM 14882 / CIP 104768 / NCIMB 8455) (Ferrobacillus ferrooxidans (strain ATCC 23270))).